The chain runs to 202 residues: Holliday junction resolvase RecU (202 aa).

Mg(2+) contacts are provided by Thr85, Asp87, Glu100, and Gln119.

Belongs to the RecU family. Mg(2+) serves as cofactor.

The protein resides in the cytoplasm. It carries out the reaction Endonucleolytic cleavage at a junction such as a reciprocal single-stranded crossover between two homologous DNA duplexes (Holliday junction).. Functionally, endonuclease that resolves Holliday junction intermediates in genetic recombination. Cleaves mobile four-strand junctions by introducing symmetrical nicks in paired strands. Promotes annealing of linear ssDNA with homologous dsDNA. Required for DNA repair, homologous recombination and chromosome segregation. The sequence is that of Holliday junction resolvase RecU from Streptococcus equi subsp. zooepidemicus (strain H70).